The sequence spans 489 residues: Inositol-pentakisphosphate 2-kinase (489 aa).

An EXKPK motif motif is present at residues 136–140; sequence EIKPK.

Belongs to the IPK1 type 2 family.

It is found in the cytoplasm. The protein localises to the nucleus. It carries out the reaction 1D-myo-inositol 1,3,4,5,6-pentakisphosphate + ATP = 1D-myo-inositol hexakisphosphate + ADP + H(+). In terms of biological role, phosphorylates Ins(1,3,4,5,6)P5 at position 2 to form Ins(1,2,3,4,5,6)P6 (InsP6 or phytate). InsP6 is involved in many processes such as mRNA export, non-homologous end-joining, endocytosis, ion channel regulation. It also protects cells from TNF-alpha-induced apoptosis. This is Inositol-pentakisphosphate 2-kinase (Ippk) from Rattus norvegicus (Rat).